The sequence spans 270 residues: Putative pyruvate, phosphate dikinase regulatory protein (270 aa).

148–155 contacts ADP; sequence GVSRTSKT.

The protein belongs to the pyruvate, phosphate/water dikinase regulatory protein family. PDRP subfamily.

It carries out the reaction N(tele)-phospho-L-histidyl/L-threonyl-[pyruvate, phosphate dikinase] + ADP = N(tele)-phospho-L-histidyl/O-phospho-L-threonyl-[pyruvate, phosphate dikinase] + AMP + H(+). The enzyme catalyses N(tele)-phospho-L-histidyl/O-phospho-L-threonyl-[pyruvate, phosphate dikinase] + phosphate + H(+) = N(tele)-phospho-L-histidyl/L-threonyl-[pyruvate, phosphate dikinase] + diphosphate. Functionally, bifunctional serine/threonine kinase and phosphorylase involved in the regulation of the pyruvate, phosphate dikinase (PPDK) by catalyzing its phosphorylation/dephosphorylation. This is Putative pyruvate, phosphate dikinase regulatory protein from Bacillus cereus (strain B4264).